Reading from the N-terminus, the 383-residue chain is MSSKLTVNAHYSPLKDEDPLDHIDSQTALDSMETDSTGKSSLYFSKSDDPLSKDIEDGISTRKLEEMSVLEANAKEPDSENAPVSRLTIFFAVSSQIVFAILVTILNKQALNIINAPLLMLSFQMAFTSLMVKMYWRFSSVHFQTLRLASAIQLKKFIFVKILGIVSKTYCLAFVPVSFYQISRGLLLPFTILLSFVLLKQKTRLFPFGGCLLVMLGFGFGVRFESHVAPIGIILGVWSSFTTAIESVAVKHYVHEYPTLDLIYIFSALMSVFCLLLSVASLELLHTVQEVVGMQAIKFFIVLILSSLSNFYLNIATFTQIKVTSPVTYMISVSARSILQTLLAVAFLGETLYGNRIYGVILILVGTLLYTLAKEHERRVASA.

The segment at 1-55 is disordered; that stretch reads MSSKLTVNAHYSPLKDEDPLDHIDSQTALDSMETDSTGKSSLYFSKSDDPLSKDI. Residues 13 to 24 show a composition bias toward basic and acidic residues; that stretch reads PLKDEDPLDHID. Polar residues predominate over residues 25 to 44; sequence SQTALDSMETDSTGKSSLYF. The segment covering 46–55 has biased composition (basic and acidic residues); sequence KSDDPLSKDI. 10 consecutive transmembrane segments (helical) span residues 87-107, 112-132, 157-177, 179-199, 205-225, 228-248, 262-282, 299-319, 329-349, and 352-372; these read LTIFFAVSSQIVFAILVTILN, NIINAPLLMLSFQMAFTSLMV, FIFVKILGIVSKTYCLAFVPV, FYQISRGLLLPFTILLSFVLL, LFPFGGCLLVMLGFGFGVRFE, VAPIGIILGVWSSFTTAIESV, LIYIFSALMSVFCLLLSVASL, FFIVLILSSLSNFYLNIATFT, YMISVSARSILQTLLAVAFLG, and LYGNRIYGVILILVGTLLYTL.

Belongs to the TPT transporter family.

The protein localises to the membrane. This is an uncharacterized protein from Schizosaccharomyces pombe (strain 972 / ATCC 24843) (Fission yeast).